Here is a 557-residue protein sequence, read N- to C-terminus: Hydroxylamine reductase (557 aa).

4 residues coordinate [4Fe-4S] cluster: cysteine 4, cysteine 7, cysteine 19, and cysteine 26. Residues histidine 253, glutamate 277, cysteine 321, cysteine 408, cysteine 436, cysteine 461, glutamate 495, and lysine 497 each coordinate hybrid [4Fe-2O-2S] cluster. Position 408 is a cysteine persulfide (cysteine 408).

This sequence belongs to the HCP family. [4Fe-4S] cluster is required as a cofactor. Requires hybrid [4Fe-2O-2S] cluster as cofactor.

The protein resides in the cytoplasm. The enzyme catalyses A + NH4(+) + H2O = hydroxylamine + AH2 + H(+). Catalyzes the reduction of hydroxylamine to form NH(3) and H(2)O. The sequence is that of Hydroxylamine reductase from Acidithiobacillus ferrooxidans (strain ATCC 53993 / BNL-5-31) (Leptospirillum ferrooxidans (ATCC 53993)).